We begin with the raw amino-acid sequence, 690 residues long: Proprotein convertase subtilisin/kexin type 9 (690 aa).

A signal peptide spans 1–28; it reads MGTVSSRRSWWPLPLLLLLLLGPAGARA. Residues 29–150 constitute a propeptide that is removed on maturation; sequence QEDEDGDYEE…IEEDSSVFAQ (122 aa). Tyrosine 36 carries the post-translational modification Sulfotyrosine. Residue serine 45 is modified to Phosphoserine. Residues 75 to 147 form the Inhibitor I9 domain; it reads TYVVVLKEET…VDYIEEDSSV (73 aa). A Peptidase S8 domain is found at 153–459; sequence PWNLERITPP…GWQLFCRTVW (307 aa). Active-site charge relay system residues include aspartate 184 and histidine 224. 2 disulfide bridges follow: cysteine 221/cysteine 253 and cysteine 321/cysteine 356. Serine 384 acts as the Charge relay system in catalysis. The interval 448 to 690 is C-terminal domain; the sequence is GAGWQLFCRT…HLVQASQELQ (243 aa). 3 disulfide bridges follow: cysteine 455–cysteine 525, cysteine 475–cysteine 524, and cysteine 484–cysteine 507. A glycan (N-linked (GlcNAc...) asparagine) is linked at asparagine 531. Cystine bridges form between cysteine 532/cysteine 599, cysteine 550/cysteine 598, cysteine 560/cysteine 586, cysteine 606/cysteine 677, cysteine 624/cysteine 676, and cysteine 633/cysteine 652. Serine 686 carries the phosphoserine modification.

The protein belongs to the peptidase S8 family. As to quaternary structure, monomer. Can self-associate to form dimers and higher multimers which may have increased LDLR degrading activity. The precursor protein but not the mature protein may form multimers. Interacts with APOB, VLDLR, LRP8/APOER2 and BACE1. The full-length immature form (pro-PCSK9) interacts with SCNN1A, SCNN1B and SCNN1G. The pro-PCSK9 form (via C-terminal domain) interacts with LDLR. Interacts (via the C-terminal domain) with ANXA2 (via repeat Annexin 1); the interaction inhibits the degradation of LDLR. The cofactor is Ca(2+). In terms of processing, cleavage by furin and PCSK5 generates a truncated inactive protein that is unable to induce LDLR degradation. Undergoes autocatalytic cleavage in the endoplasmic reticulum to release the propeptide from the N-terminus and the cleavage of the propeptide is strictly required for its maturation and activation. The cleaved propeptide however remains associated with the catalytic domain through non-covalent interactions, preventing potential substrates from accessing its active site. As a result, it is secreted from cells as a propeptide-containing, enzymatically inactive protein. Post-translationally, phosphorylation protects the propeptide against proteolysis.

The protein localises to the cytoplasm. It is found in the secreted. It localises to the endosome. Its subcellular location is the lysosome. The protein resides in the cell surface. The protein localises to the endoplasmic reticulum. It is found in the golgi apparatus. Its activity is regulated as follows. Its proteolytic activity is autoinhibited by the non-covalent binding of the propeptide to the catalytic domain. Inhibited by EGTA. Functionally, crucial player in the regulation of plasma cholesterol homeostasis. Binds to low-density lipid receptor family members: low density lipoprotein receptor (LDLR), very low density lipoprotein receptor (VLDLR), apolipoprotein E receptor (LRP1/APOER) and apolipoprotein receptor 2 (LRP8/APOER2), and promotes their degradation in intracellular acidic compartments. Acts via a non-proteolytic mechanism to enhance the degradation of the hepatic LDLR through a clathrin LDLRAP1/ARH-mediated pathway. May prevent the recycling of LDLR from endosomes to the cell surface or direct it to lysosomes for degradation. Can induce ubiquitination of LDLR leading to its subsequent degradation. Inhibits intracellular degradation of APOB via the autophagosome/lysosome pathway in a LDLR-independent manner. Involved in the disposal of non-acetylated intermediates of BACE1 in the early secretory pathway. Inhibits epithelial Na(+) channel (ENaC)-mediated Na(+) absorption by reducing ENaC surface expression primarily by increasing its proteasomal degradation. Regulates neuronal apoptosis via modulation of LRP8/APOER2 levels and related anti-apoptotic signaling pathways. This chain is Proprotein convertase subtilisin/kexin type 9 (PCSK9), found in Gorilla gorilla gorilla (Western lowland gorilla).